We begin with the raw amino-acid sequence, 516 residues long: uncharacterized protein (516 aa).

To H.influenzae HI_0521.

This is an uncharacterized protein from Escherichia coli (strain K12).